We begin with the raw amino-acid sequence, 466 residues long: Cysteine--tRNA ligase (466 aa).

Residue Cys-29 participates in Zn(2+) binding. Positions 31 to 41 match the 'HIGH' region motif; that stretch reads PTVYNYIHIGN. Zn(2+) contacts are provided by Cys-209, His-234, and Glu-238. A 'KMSKS' region motif is present at residues 266 to 270; the sequence is KMSKS. Lys-269 contributes to the ATP binding site. The residue at position 270 (Ser-270) is a Phosphoserine.

Belongs to the class-I aminoacyl-tRNA synthetase family. In terms of assembly, monomer. Zn(2+) is required as a cofactor.

It is found in the cytoplasm. It catalyses the reaction tRNA(Cys) + L-cysteine + ATP = L-cysteinyl-tRNA(Cys) + AMP + diphosphate. The protein is Cysteine--tRNA ligase of Bacillus pumilus (strain SAFR-032).